A 1154-amino-acid chain; its full sequence is Caspase recruitment domain-containing protein 11 (1154 aa).

Positions Glu18 to Glu110 constitute a CARD domain. The tract at residues Pro111–Thr128 is linker. Residues Phe130–Leu449 are a coiled coil. Ser448 and Ser466 each carry phosphoserine. An inhibitory domain (ID) region spans residues Pro450–Val666. The interval Gln460–Glu626 is disordered. Residues Glu473–Pro484 are compositionally biased toward acidic residues. A Phosphoserine modification is found at Ser512. Residues Arg518–Glu529 are compositionally biased toward basic and acidic residues. Residues Ala534–Ser562 are compositionally biased toward polar residues. The residue at position 535 (Ser535) is a Phosphoserine. Ser559 bears the Phosphoserine; by PKC/PRKCB and PKC/PRKCQ mark. Residues Ile573–Val587 show a composition bias toward basic and acidic residues. Position 593 is a phosphoserine (Ser593). A compositionally biased stretch (low complexity) spans Ser614–Ser625. Residues Ser644 and Ser652 each carry the phosphoserine; by PKC/PRKCB and PKC/PRKCQ modification. Residues Gln667 to His755 form the PDZ domain. Residues Ser886 and Ser925 each carry the phosphoserine modification. The Guanylate kinase-like domain maps to Arg973–Gly1140.

As to quaternary structure, homodimer; disulfide-linked. Homomultimer; polymerizes following activation, forming a nucleating helical template that seeds BCL10-filament formation via a CARD-CARD interaction. Interacts (via CARD domain) with BCL10 (via CARD domain); interaction takes place following CARD11 activation and polymerization, leading to the formation of a filamentous CBM complex assembly. Component of a CBM complex (CARD11-BCL10-MALT1) complex involved in NF-kappa-B activation. Found in a membrane raft complex, at least composed of BCL10, CARD11, DPP4 and IKBKB. Interacts (via PDZ domain) with DPP4 (via cytoplasmic tail). Phosphorylation at Ser-559, Ser-644 and Ser-652 by PRKCB and PRKCQ leads to a shift from an inactive to an active form that activates the NF-kappa-B signaling. In terms of tissue distribution, detected in adult peripheral blood leukocytes, thymus, spleen and liver. Also found in promyelocytic leukemia HL-60 cells, chronic myelogenous leukemia K-562 cells, Burkitt's lymphoma Raji cells and colorectal adenocarcinoma SW480 cells. Not detected in HeLaS3, MOLT-4, A-549 and G431 cells.

The protein localises to the cytoplasm. Its subcellular location is the membrane raft. Maintained in an autoinhibited state via homodimerization in which the CARD domain forms an extensive interaction with the adjacent linker and coiled-coil regions. Activation downstream of T-cell receptor (TCR) by phosphorylation by PRKCB and PRKCQ triggers CARD11 homooligomerization and BCL10 recruitment, followed by activation of NF-kappa-B. Its function is as follows. Adapter protein that plays a key role in adaptive immune response by transducing the activation of NF-kappa-B downstream of T-cell receptor (TCR) and B-cell receptor (BCR) engagement. Transduces signals downstream TCR or BCR activation via the formation of a multiprotein complex together with BCL10 and MALT1 that induces NF-kappa-B and MAP kinase p38 (MAPK11, MAPK12, MAPK13 and/or MAPK14) pathways. Upon activation in response to TCR or BCR triggering, CARD11 homooligomerizes to form a nucleating helical template that recruits BCL10 via CARD-CARD interaction, thereby promoting polymerization of BCL10 and subsequent recruitment of MALT1: this leads to I-kappa-B kinase (IKK) phosphorylation and degradation, and release of NF-kappa-B proteins for nuclear translocation. Its binding to DPP4 induces T-cell proliferation and NF-kappa-B activation in a T-cell receptor/CD3-dependent manner. Promotes linear ubiquitination of BCL10 by promoting the targeting of BCL10 to RNF31/HOIP. Stimulates the phosphorylation of BCL10. Also activates the TORC1 signaling pathway. The protein is Caspase recruitment domain-containing protein 11 of Homo sapiens (Human).